Reading from the N-terminus, the 574-residue chain is Arginine--tRNA ligase (574 aa).

The short motif at 124–134 is the 'HIGH' region element; sequence ANPNGPLHIGH.

The protein belongs to the class-I aminoacyl-tRNA synthetase family.

It localises to the cytoplasm. It carries out the reaction tRNA(Arg) + L-arginine + ATP = L-arginyl-tRNA(Arg) + AMP + diphosphate. In Methanococcus aeolicus (strain ATCC BAA-1280 / DSM 17508 / OCM 812 / Nankai-3), this protein is Arginine--tRNA ligase.